A 397-amino-acid polypeptide reads, in one-letter code: Protein PEP-RELATED DEVELOPMENT ARRESTED 1, chloroplastic (397 aa).

A chloroplast-targeting transit peptide spans 1 to 52; the sequence is MLQSIHLRFSSTPSPSKRESLIIPSVICSFPFTSSSFRPKQTQKLKRLVQFC. A compositionally biased stretch (basic and acidic residues) spans 315–334; the sequence is KDEGADNLSKEDDSSTEGRK. The segment at 315–351 is disordered; sequence KDEGADNLSKEDDSSTEGRKPSGLNGRGSVTGRKPLP.

Interacts with FSD2 and MRL7. In terms of tissue distribution, highly expressed in young leaves, shoots and flowers. Expressed at low levels in stems and siliques.

The protein localises to the plastid. Its subcellular location is the chloroplast stroma. The protein resides in the chloroplast nucleoid. Plays an essential role in early steps of chloroplast development. May be involved in the redox control of plastid gene expression by maintening the redox state around chloroplast nucleoids. May positively regulate plastid-encoded RNA polymerase (PEP) activity, through binding to FSD2. This Arabidopsis thaliana (Mouse-ear cress) protein is Protein PEP-RELATED DEVELOPMENT ARRESTED 1, chloroplastic (PRDA1).